We begin with the raw amino-acid sequence, 208 residues long: Uracil phosphoribosyltransferase (208 aa).

Residues R78, R103, and 130 to 138 (DPMFATGGT) each bind 5-phospho-alpha-D-ribose 1-diphosphate. Uracil contacts are provided by residues I193 and 198–200 (GDA). D199 lines the 5-phospho-alpha-D-ribose 1-diphosphate pocket.

It belongs to the UPRTase family. It depends on Mg(2+) as a cofactor.

It catalyses the reaction UMP + diphosphate = 5-phospho-alpha-D-ribose 1-diphosphate + uracil. Its pathway is pyrimidine metabolism; UMP biosynthesis via salvage pathway; UMP from uracil: step 1/1. With respect to regulation, allosterically activated by GTP. In terms of biological role, catalyzes the conversion of uracil and 5-phospho-alpha-D-ribose 1-diphosphate (PRPP) to UMP and diphosphate. The sequence is that of Uracil phosphoribosyltransferase from Campylobacter curvus (strain 525.92).